The primary structure comprises 416 residues: Enterobactin exporter EntS (416 aa).

At 1–21 (MNKQSWLLNLSLLKTHPAFRA) the chain is on the cytoplasmic side. Residues 22–42 (VFLARFISIVSLGLLGVAVPV) form a helical membrane-spanning segment. The Periplasmic portion of the chain corresponds to 43–55 (QIQMMTHSTWQVG). The chain crosses the membrane as a helical span at residues 56 to 76 (LSVTLTGGAMFVGLMVGGVLA). Topologically, residues 77 to 83 (DRYERKK) are cytoplasmic. The helical transmembrane segment at 84 to 104 (VILLARGTCGIGFIGLCLNAL) threads the bilayer. At 105–109 (LPEPS) the chain is on the periplasmic side. The chain crosses the membrane as a helical span at residues 110–130 (LLAIYLLGLWDGFFASLGVTA). Over 131–156 (LLAATPALVGRENLMQAGALTMLTVR) the chain is Cytoplasmic. A helical transmembrane segment spans residues 157 to 177 (LGSVISPMIGGLLLATGGVAW). A topological domain (periplasmic) is located at residue asparagine 178. The chain crosses the membrane as a helical span at residues 179–199 (YGLAAAGTFITLLPLLSLPAL). Over 200–218 (PPPPQPREHPLKSLLAGFR) the chain is Cytoplasmic. A helical membrane pass occupies residues 219 to 239 (FLLASPLVGGIALLGGLLTMA). At 240-256 (SAVRVLYPALADNWQMS) the chain is on the periplasmic side. Residues 257 to 277 (AAEIGFLYAAIPLGAAIGALT) traverse the membrane as a helical segment. Residues 278–287 (SGKLAHSARP) are Cytoplasmic-facing. The helical transmembrane segment at 288–307 (GLLMLLSTLGSFLAIGLFGL) threads the bilayer. Topologically, residues 308–313 (MPMWIL) are periplasmic. A helical membrane pass occupies residues 314–336 (GVVCLALFGWLSAVSSLLQYTML). Topologically, residues 337 to 356 (QTQTPEAMLGRINGLWTAQN) are cytoplasmic. Residues 357–377 (VTGDAIGAALLGGLGAMMTPV) form a helical membrane-spanning segment. Residue alanine 378 is a topological domain, periplasmic. The helical transmembrane segment at 379–399 (SASASGFGLLIIGVLLLLVLV) threads the bilayer. Residues 400-416 (ELRRFRQTPPQVTASDS) lie on the Cytoplasmic side of the membrane.

This sequence belongs to the major facilitator superfamily. EntS (TC 2.A.1.38) family.

It localises to the cell inner membrane. Its function is as follows. Component of an export pathway for enterobactin. The protein is Enterobactin exporter EntS of Shigella boydii serotype 18 (strain CDC 3083-94 / BS512).